The sequence spans 525 residues: GMP synthase [glutamine-hydrolyzing] (525 aa).

Residues 8-207 (KILILDFGSQ…ALDICGCAAN (200 aa)) form the Glutamine amidotransferase type-1 domain. The active-site Nucleophile is the cysteine 85. Catalysis depends on residues histidine 181 and glutamate 183. Positions 208-400 (WKPSSIIEDA…LGLPYNMLYR (193 aa)) constitute a GMPS ATP-PPase domain. 235 to 241 (SGGVDSS) contributes to the ATP binding site.

Homodimer.

It carries out the reaction XMP + L-glutamine + ATP + H2O = GMP + L-glutamate + AMP + diphosphate + 2 H(+). It functions in the pathway purine metabolism; GMP biosynthesis; GMP from XMP (L-Gln route): step 1/1. Its function is as follows. Catalyzes the synthesis of GMP from XMP. The protein is GMP synthase [glutamine-hydrolyzing] of Shewanella baltica (strain OS223).